The sequence spans 310 residues: ADP-L-glycero-D-manno-heptose-6-epimerase (310 aa).

Residues 10 to 11, 31 to 32, Lys38, Lys53, 75 to 79, and Asn92 each bind NADP(+); these read FI, DN, and EGACS. The Proton acceptor role is filled by Tyr140. Lys144 contacts NADP(+). Residue Asn169 coordinates substrate. Val170 and Lys178 together coordinate NADP(+). Lys178 (proton acceptor) is an active-site residue. Substrate-binding positions include Ser180, His187, 201 to 204, Arg209, and Tyr272; that span reads FEGS.

It belongs to the NAD(P)-dependent epimerase/dehydratase family. HldD subfamily. As to quaternary structure, homopentamer. The cofactor is NADP(+).

It carries out the reaction ADP-D-glycero-beta-D-manno-heptose = ADP-L-glycero-beta-D-manno-heptose. It functions in the pathway nucleotide-sugar biosynthesis; ADP-L-glycero-beta-D-manno-heptose biosynthesis; ADP-L-glycero-beta-D-manno-heptose from D-glycero-beta-D-manno-heptose 7-phosphate: step 4/4. Functionally, catalyzes the interconversion between ADP-D-glycero-beta-D-manno-heptose and ADP-L-glycero-beta-D-manno-heptose via an epimerization at carbon 6 of the heptose. The protein is ADP-L-glycero-D-manno-heptose-6-epimerase of Klebsiella pneumoniae subsp. pneumoniae (strain ATCC 700721 / MGH 78578).